The primary structure comprises 212 residues: 3-oxo-tetronate 4-phosphate decarboxylase (212 aa).

E79 (proton acceptor) is an active-site residue. Positions 79, 98, and 100 each coordinate Zn(2+). Y125 serves as the catalytic Proton donor. H165 contacts Zn(2+).

This sequence belongs to the aldolase class II family. AraD/FucA subfamily. Requires Zn(2+) as cofactor.

It carries out the reaction 3-dehydro-4-O-phospho-D-erythronate + H(+) = dihydroxyacetone phosphate + CO2. It catalyses the reaction 3-dehydro-4-O-phospho-L-erythronate + H(+) = dihydroxyacetone phosphate + CO2. Catalyzes the decarboxylation of 3-oxo-tetronate 4-phosphate to dihydroxyacetone phosphate (DHAP) and CO(2). This Escherichia coli (strain K12) protein is 3-oxo-tetronate 4-phosphate decarboxylase.